A 238-amino-acid chain; its full sequence is Ditrans,polycis-undecaprenyl-diphosphate synthase ((2E,6E)-farnesyl-diphosphate specific) (238 aa).

Asp14 is a catalytic residue. Asp14 contacts Mg(2+). Residues Gly15–Arg18, Trp19, Arg27, His31, and Ser59–Glu61 each bind substrate. Asn62 (proton acceptor) is an active-site residue. Substrate contacts are provided by residues Trp63, Arg65, Arg182, and Arg188 to Ser190. A Mg(2+)-binding site is contributed by Glu201.

It belongs to the UPP synthase family. As to quaternary structure, homodimer. Requires Mg(2+) as cofactor.

The enzyme catalyses 8 isopentenyl diphosphate + (2E,6E)-farnesyl diphosphate = di-trans,octa-cis-undecaprenyl diphosphate + 8 diphosphate. Functionally, catalyzes the sequential condensation of isopentenyl diphosphate (IPP) with (2E,6E)-farnesyl diphosphate (E,E-FPP) to yield (2Z,6Z,10Z,14Z,18Z,22Z,26Z,30Z,34E,38E)-undecaprenyl diphosphate (di-trans,octa-cis-UPP). UPP is the precursor of glycosyl carrier lipid in the biosynthesis of bacterial cell wall polysaccharide components such as peptidoglycan and lipopolysaccharide. This chain is Ditrans,polycis-undecaprenyl-diphosphate synthase ((2E,6E)-farnesyl-diphosphate specific), found in Legionella pneumophila (strain Paris).